The following is a 530-amino-acid chain: uncharacterized protein (530 aa).

Basic and acidic residues-rich tracts occupy residues 1–11 and 28–38; these read MTALNDTERAV and PRSEETASERP. The disordered stretch occupies residues 1–38; it reads MTALNDTERAVRNWTAGRPHRPAPMRPPRSEETASERP. The Cytoplasmic segment spans residues 1 to 50; sequence MTALNDTERAVRNWTAGRPHRPAPMRPPRSEETASERPSRYYPTWLPSRS. Residues 51-71 form a helical membrane-spanning segment; that stretch reads FIAAVIAIGGMQLLATMDSTV. Topologically, residues 72–91 are extracellular; the sequence is AIVALPKIQNELSLSDAGRS. A helical transmembrane segment spans residues 92 to 112; the sequence is WVITAYVLTFGGLMLLGGRLG. The Cytoplasmic segment spans residues 113–119; sequence DTIGRKR. Residues 120-140 traverse the membrane as a helical segment; it reads TFIVGVALFTISSVLCAVAWD. Residues 141–150 are Extracellular-facing; the sequence is EATLVIARLS. The chain crosses the membrane as a helical span at residues 151-171; it reads QGVGSAIASPTGLALVATTFP. Residues 172–180 lie on the Cytoplasmic side of the membrane; sequence KGPARNAAT. A helical membrane pass occupies residues 181–201; sequence AVFAAMTAIGSVMGLVVGGAL. At 202–203 the chain is on the extracellular side; the sequence is TE. Residues 204–224 form a helical membrane-spanning segment; that stretch reads VSWRWAFLVNVPIGLVMIYLA. Over 225 to 239 the chain is Cytoplasmic; the sequence is RTALRETNKERMKLD. Residues 240-260 traverse the membrane as a helical segment; sequence ATGAILATLACTAAVFAFSIG. Topologically, residues 261–266 are extracellular; the sequence is PEKGWM. Residues 267-287 traverse the membrane as a helical segment; it reads SGITIGSGLVALAAAVAFVIV. The Cytoplasmic segment spans residues 288-306; the sequence is ERTAENPVVPFHLFRDRNR. A helical membrane pass occupies residues 307–327; the sequence is LVTFSAILLAGGVMFSLTVCI. The Extracellular portion of the chain corresponds to 328-343; it reads GLYVQDILGYSALRAG. Residues 344-364 form a helical membrane-spanning segment; sequence VGFIPFVIAMGIGLGVSSQLV. Over 365–370 the chain is Cytoplasmic; it reads SRFSPR. A helical membrane pass occupies residues 371 to 391; sequence VLTIGGGYLLFGAMLYGSFFM. At 392 to 400 the chain is on the extracellular side; sequence HRGVPYFPN. The helical transmembrane segment at 401–421 threads the bilayer; sequence LVMPIVVGGIGIGMAVVPLTL. The Cytoplasmic segment spans residues 422–437; it reads SAIAGVGFDQIGPVSA. A helical transmembrane segment spans residues 438 to 458; sequence IALMLQSLGGPLVLAVIQAVI. Residues 459–488 are Extracellular-facing; that stretch reads TSRTLYLGGTTGPVKFMNDVQLAALDHAYT. The helical transmembrane segment at 489–509 threads the bilayer; that stretch reads YGLLWVAGAAIIVGGMALFIG. The Cytoplasmic portion of the chain corresponds to 510 to 530; sequence YTPQQVAHAQEVKEAIDAGEL.

It belongs to the major facilitator superfamily.

Its subcellular location is the cell membrane. This is an uncharacterized protein from Mycobacterium tuberculosis (strain CDC 1551 / Oshkosh).